A 143-amino-acid chain; its full sequence is Large-conductance mechanosensitive channel (143 aa).

The next 3 membrane-spanning stretches (helical) occupy residues 10-30 (FAIKGNMMDLAIGVIIGGAFG), 40-60 (IIMPLITVITGGGVDFSQKFI), and 86-106 (GNFLTILINFLILAWVVFLMV).

The protein belongs to the MscL family. In terms of assembly, homopentamer.

The protein resides in the cell inner membrane. In terms of biological role, channel that opens in response to stretch forces in the membrane lipid bilayer. May participate in the regulation of osmotic pressure changes within the cell. The polypeptide is Large-conductance mechanosensitive channel (Acinetobacter baumannii (strain ATCC 17978 / DSM 105126 / CIP 53.77 / LMG 1025 / NCDC KC755 / 5377)).